The primary structure comprises 79 residues: CATR tumorigenic conversion 1 protein (79 aa).

This is CATR tumorigenic conversion 1 protein (CATR1) from Homo sapiens (Human).